A 219-amino-acid chain; its full sequence is MSNQKALVIFSGGQDSTTCLIQAIQTYGRENVQAITFQYGQRHAVELERARWIAQDLGVKQTVLDLSLMRQITHNALMDDTAAIETAENGVPNTFVDGRNALFLLYAAIYAKGQGIRHIIAGVCETDFSGYPDCRDVFVKSMNVTLNLAMDYDFQIHTPLMYLTKAQTWALADEMGALDYIREQTHTCYNGIVGGCRECPSCILRERGLAEYLESKKAV.

ATP is bound at residue 10-20 (FSGGQDSTTCL). Residues Cys-188, Cys-196, Cys-199, and Cys-202 each contribute to the Zn(2+) site.

It belongs to the QueC family. Zn(2+) serves as cofactor.

The catalysed reaction is 7-carboxy-7-deazaguanine + NH4(+) + ATP = 7-cyano-7-deazaguanine + ADP + phosphate + H2O + H(+). Its pathway is purine metabolism; 7-cyano-7-deazaguanine biosynthesis. Its function is as follows. Catalyzes the ATP-dependent conversion of 7-carboxy-7-deazaguanine (CDG) to 7-cyano-7-deazaguanine (preQ(0)). The sequence is that of 7-cyano-7-deazaguanine synthase from Neisseria meningitidis serogroup A / serotype 4A (strain DSM 15465 / Z2491).